The sequence spans 87 residues: U3-theraphotoxin-Cg1b (87 aa).

A signal peptide spans 1–23 (MRTFTLIAILTCAVLVIFHVSAA). Residues 24 to 48 (EELEAQDVIQPEDIFTGVATLEEDR) constitute a propeptide that is removed on maturation. Disulfide bonds link C52–C65, C56–C79, and C73–C84.

The protein belongs to the neurotoxin 12 (Hwtx-2) family. 03 (juruin) subfamily. In terms of tissue distribution, expressed by the venom gland.

The protein resides in the secreted. Functionally, probable ion channel inhibitor. This is U3-theraphotoxin-Cg1b from Chilobrachys guangxiensis (Chinese earth tiger tarantula).